Here is a 185-residue protein sequence, read N- to C-terminus: Jasmonate-induced protein homolog (185 aa).

This sequence belongs to the jasmonate-induced protein family.

This chain is Jasmonate-induced protein homolog, found in Atriplex canescens (Fourwing saltbush).